We begin with the raw amino-acid sequence, 418 residues long: Queuine tRNA-ribosyltransferase accessory subunit 2 (418 aa).

Zn(2+) is bound by residues Cys-325, Cys-327, Cys-330, and His-356.

The protein belongs to the queuine tRNA-ribosyltransferase family. QTRT2 subfamily. As to quaternary structure, heterodimer of a catalytic subunit and an accessory subunit. Requires Zn(2+) as cofactor.

Its subcellular location is the cytoplasm. Its function is as follows. Non-catalytic subunit of the queuine tRNA-ribosyltransferase (TGT) that catalyzes the base-exchange of a guanine (G) residue with queuine (Q) at position 34 (anticodon wobble position) in tRNAs with GU(N) anticodons (tRNA-Asp, -Asn, -His and -Tyr), resulting in the hypermodified nucleoside queuosine (7-(((4,5-cis-dihydroxy-2-cyclopenten-1-yl)amino)methyl)-7-deazaguanosine). The polypeptide is Queuine tRNA-ribosyltransferase accessory subunit 2 (Drosophila yakuba (Fruit fly)).